We begin with the raw amino-acid sequence, 485 residues long: Cytochrome P450 monooxygenase tndB (485 aa).

The chain crosses the membrane as a helical span at residues 20 to 40 (VYGISAVIAVGLAIYSASLAI). Cys481 lines the heme pocket.

This sequence belongs to the cytochrome P450 family. It depends on heme as a cofactor.

The protein resides in the membrane. It functions in the pathway secondary metabolite biosynthesis; terpenoid biosynthesis. Cytochrome P450 monooxygenase; part of the gene cluster that mediates the biosynthesis of talaronoid C, a fusicoccane diterpenoid with an unprecedented tricyclic 5/8/6 ring system. The first step in the pathway is performed by the fusicoccadiene synthase tndC that possesses both prenyl transferase and terpene cyclase activity, converting isopentenyl diphosphate and dimethylallyl diphosphate into geranylgeranyl diphosphate (GGDP) and further converting GGDP into talarodiene, a precursor for talaronoid C. The remaining enzymes from the cluster include the cytochrome P450 monooxygenase tndB, the aldehyde reductase tndE and the alcohol dehydrogenase tndF that are involved in the conversion of talarodiene into talaronoid C. The chain is Cytochrome P450 monooxygenase tndB from Aspergillus flavipes.